Consider the following 157-residue polypeptide: Lectin (157 aa).

Cysteines 37 and 54 form a disulfide.

Homodimer. Detected in fruits (at protein level).

The protein resides in the secreted. Its function is as follows. Binds with high affinity specifically to chito-oligosaccharides. May play a role in plant defense against pathogens by directly binding with the chitin cell wall. Forms filamentous structures at higher concentrations and may promote wound healing by forming filaments with phloem proteins like PP1. The chain is Lectin from Coccinia grandis (Ivy gourd).